The primary structure comprises 204 residues: Small ribosomal subunit protein uS4 (204 aa).

The S4 RNA-binding domain occupies Arg92–Ile153.

Belongs to the universal ribosomal protein uS4 family. As to quaternary structure, part of the 30S ribosomal subunit. Contacts protein S5. The interaction surface between S4 and S5 is involved in control of translational fidelity.

In terms of biological role, one of the primary rRNA binding proteins, it binds directly to 16S rRNA where it nucleates assembly of the body of the 30S subunit. Its function is as follows. With S5 and S12 plays an important role in translational accuracy. The sequence is that of Small ribosomal subunit protein uS4 from Streptomyces coelicolor (strain ATCC BAA-471 / A3(2) / M145).